Reading from the N-terminus, the 325-residue chain is Coiled-coil domain-containing protein 130 homolog (325 aa).

A coiled-coil region spans residues 156–262; the sequence is LKLENKKLDI…KLKRELIKNE (107 aa).

Belongs to the CWC16 family.

In Dictyostelium discoideum (Social amoeba), this protein is Coiled-coil domain-containing protein 130 homolog.